The chain runs to 356 residues: 1-deoxy-D-xylulose 5-phosphate reductoisomerase (356 aa).

Residues T7, G8, S9, I10, G31, N33, and N111 each coordinate NADPH. K112 contacts 1-deoxy-D-xylulose 5-phosphate. E113 is a binding site for NADPH. A Mn(2+)-binding site is contributed by D131. Residues S132, E133, S155, and H178 each contribute to the 1-deoxy-D-xylulose 5-phosphate site. E133 serves as a coordination point for Mn(2+). G184 contributes to the NADPH binding site. Positions 191, 196, 197, and 200 each coordinate 1-deoxy-D-xylulose 5-phosphate. E200 is a Mn(2+) binding site.

This sequence belongs to the DXR family. It depends on Mg(2+) as a cofactor. Mn(2+) is required as a cofactor.

The enzyme catalyses 2-C-methyl-D-erythritol 4-phosphate + NADP(+) = 1-deoxy-D-xylulose 5-phosphate + NADPH + H(+). It participates in isoprenoid biosynthesis; isopentenyl diphosphate biosynthesis via DXP pathway; isopentenyl diphosphate from 1-deoxy-D-xylulose 5-phosphate: step 1/6. Functionally, catalyzes the NADPH-dependent rearrangement and reduction of 1-deoxy-D-xylulose-5-phosphate (DXP) to 2-C-methyl-D-erythritol 4-phosphate (MEP). This Campylobacter jejuni subsp. jejuni serotype O:23/36 (strain 81-176) protein is 1-deoxy-D-xylulose 5-phosphate reductoisomerase.